We begin with the raw amino-acid sequence, 132 residues long: Fatty acid-binding protein, liver (132 aa).

V1 bears the N-acetylvaline mark. Y19 bears the Phosphotyrosine; by Tyr-kinases mark.

It belongs to the calycin superfamily. Fatty-acid binding protein (FABP) family.

It localises to the cytoplasm. In terms of biological role, FABPs are thought to play a role in the intracellular transport of long-chain fatty acids and their acyl-CoA esters. The chain is Fatty acid-binding protein, liver from Ginglymostoma cirratum (Nurse shark).